The chain runs to 166 residues: Large ribosomal subunit protein uL10 (166 aa).

It belongs to the universal ribosomal protein uL10 family. In terms of assembly, part of the ribosomal stalk of the 50S ribosomal subunit. The N-terminus interacts with L11 and the large rRNA to form the base of the stalk. The C-terminus forms an elongated spine to which L12 dimers bind in a sequential fashion forming a multimeric L10(L12)X complex.

In terms of biological role, forms part of the ribosomal stalk, playing a central role in the interaction of the ribosome with GTP-bound translation factors. This Streptococcus pneumoniae serotype 19F (strain G54) protein is Large ribosomal subunit protein uL10.